We begin with the raw amino-acid sequence, 547 residues long: Glucose-6-phosphate isomerase (547 aa).

Glu351 acts as the Proton donor in catalysis. Residues His382 and Lys510 contribute to the active site.

This sequence belongs to the GPI family.

It localises to the cytoplasm. It catalyses the reaction alpha-D-glucose 6-phosphate = beta-D-fructose 6-phosphate. It participates in carbohydrate biosynthesis; gluconeogenesis. Its pathway is carbohydrate degradation; glycolysis; D-glyceraldehyde 3-phosphate and glycerone phosphate from D-glucose: step 2/4. Its function is as follows. Catalyzes the reversible isomerization of glucose-6-phosphate to fructose-6-phosphate. The protein is Glucose-6-phosphate isomerase of Beijerinckia indica subsp. indica (strain ATCC 9039 / DSM 1715 / NCIMB 8712).